A 251-amino-acid chain; its full sequence is Cell division protein ZapD (251 aa).

This sequence belongs to the ZapD family. In terms of assembly, interacts with FtsZ.

It localises to the cytoplasm. Cell division factor that enhances FtsZ-ring assembly. Directly interacts with FtsZ and promotes bundling of FtsZ protofilaments, with a reduction in FtsZ GTPase activity. This chain is Cell division protein ZapD, found in Paraburkholderia phytofirmans (strain DSM 17436 / LMG 22146 / PsJN) (Burkholderia phytofirmans).